The chain runs to 210 residues: DNA-directed RNA polymerase subunit 5-like protein 1 (210 aa).

This sequence belongs to the archaeal Rpo5/eukaryotic RPB5 RNA polymerase subunit family.

It is found in the nucleus. The chain is DNA-directed RNA polymerase subunit 5-like protein 1 (NRPB5L1) from Arabidopsis thaliana (Mouse-ear cress).